Consider the following 283-residue polypeptide: Orotidine 5'-phosphate decarboxylase (283 aa).

Lys-97 (proton donor) is an active-site residue.

Belongs to the OMP decarboxylase family. Type 2 subfamily.

The catalysed reaction is orotidine 5'-phosphate + H(+) = UMP + CO2. It participates in pyrimidine metabolism; UMP biosynthesis via de novo pathway; UMP from orotate: step 2/2. This chain is Orotidine 5'-phosphate decarboxylase, found in Clostridium botulinum (strain Kyoto / Type A2).